The chain runs to 230 residues: Cytidylate kinase (230 aa).

11 to 19 contacts ATP; that stretch reads GPAAAGKST.

Belongs to the cytidylate kinase family. Type 1 subfamily.

The protein resides in the cytoplasm. The catalysed reaction is CMP + ATP = CDP + ADP. It catalyses the reaction dCMP + ATP = dCDP + ADP. This is Cytidylate kinase from Oceanobacillus iheyensis (strain DSM 14371 / CIP 107618 / JCM 11309 / KCTC 3954 / HTE831).